The sequence spans 1612 residues: DNA topoisomerase 2-beta (1612 aa).

At Ala-2 the chain carries N-acetylalanine. Lys-3 bears the N6-acetyllysine mark. Residues Lys-21 and Lys-22 each participate in a glycyl lysine isopeptide (Lys-Gly) (interchain with G-Cter in SUMO2) cross-link. ATP-binding positions include Asn-100, Asn-129, and 157-159; that span reads SSN. Residues Lys-165 and Lys-166 each participate in a glycyl lysine isopeptide (Lys-Gly) (interchain with G-Cter in SUMO2) cross-link. Residue 170–177 participates in ATP binding; that stretch reads GRNGYGAK. Glycyl lysine isopeptide (Lys-Gly) (interchain with G-Cter in SUMO2) cross-links involve residues Lys-216 and Lys-287. Residues 351–353 form an interaction with DNA region; sequence KKK. Glycyl lysine isopeptide (Lys-Gly) (interchain with G-Cter in SUMO2) cross-links involve residues Lys-355 and Lys-361. 385-387 serves as a coordination point for ATP; sequence QTK. Glycyl lysine isopeptide (Lys-Gly) (interchain with G-Cter in SUMO2) cross-links involve residues Lys-425, Lys-427, and Lys-434. The 118-residue stretch at 464 to 581 folds into the Toprim domain; sequence CTLILTEGDS…SLLKHGFLEE (118 aa). Positions 470, 550, and 552 each coordinate Mg(2+). Residues Lys-588, Lys-593, Lys-623, Lys-631, Lys-634, Lys-664, and Lys-700 each participate in a glycyl lysine isopeptide (Lys-Gly) (interchain with G-Cter in SUMO2) cross-link. Positions 724-1177 constitute a Topo IIA-type catalytic domain; it reads IPSLVDGFKP…SPSDLWKEDL (454 aa). Tyr-814 serves as the catalytic O-(5'-phospho-DNA)-tyrosine intermediate. The tract at residues 999–1008 is interaction with DNA; that stretch reads KLQTTLTCNS. A Glycyl lysine isopeptide (Lys-Gly) (interchain with G-Cter in SUMO2) cross-link involves residue Lys-1080. The disordered stretch occupies residues 1098-1128; sequence AWKEAQEKAAEEEDTQNQHDDSSSDSGTPSG. Glycyl lysine isopeptide (Lys-Gly) (interchain with G-Cter in SUMO2) cross-links involve residues Lys-1202, Lys-1205, Lys-1214, and Lys-1215. The residue at position 1224 (Ser-1224) is a Phosphoserine. Residues Lys-1238, Lys-1250, and Lys-1259 each participate in a glycyl lysine isopeptide (Lys-Gly) (interchain with G-Cter in SUMO2) cross-link. The disordered stretch occupies residues 1245–1586; that stretch reads LLKKKKGDPD…FTSEPPALPR (342 aa). Residue Thr-1280 is modified to Phosphothreonine. Glycyl lysine isopeptide (Lys-Gly) (interchain with G-Cter in SUMO2) cross-links involve residues Lys-1311 and Lys-1315. 2 stretches are compositionally biased toward basic and acidic residues: residues 1322–1332 and 1346–1358; these read PWSDDESKSES and SLLR…RPKY. Phosphoserine is present on residues Ser-1324, Ser-1328, Ser-1330, Ser-1332, and Ser-1346. The residue at position 1358 (Tyr-1358) is a Phosphotyrosine. Positions 1362–1379 are enriched in acidic residues; the sequence is FSEEEEEDADDDDDNNDL. Ser-1363 carries the post-translational modification Phosphoserine. Residue Lys-1385 forms a Glycyl lysine isopeptide (Lys-Gly) (interchain with G-Cter in SUMO2) linkage. Ser-1387 bears the Phosphoserine mark. Thr-1390 carries the phosphothreonine modification. Ser-1400 is subject to Phosphoserine. Tyr-1408 is modified (phosphotyrosine). Ser-1411 carries the post-translational modification Phosphoserine. Basic and acidic residues predominate over residues 1417-1429; the sequence is ATPEKSSHDKKSQ. Residue Lys-1427 forms a Glycyl lysine isopeptide (Lys-Gly) (interchain with G-Cter in SUMO2) linkage. Phosphoserine is present on residues Ser-1428, Ser-1439, and Ser-1441. Residue Lys-1443 forms a Glycyl lysine isopeptide (Lys-Gly) (interchain with G-Cter in SUMO2) linkage. Over residues 1443-1453 the composition is skewed to basic and acidic residues; the sequence is KSEDDSAKFDS. Phosphoserine occurs at positions 1448, 1453, and 1460. Lys-1477 is covalently cross-linked (Glycyl lysine isopeptide (Lys-Gly) (interchain with G-Cter in SUMO2)). The tract at residues 1493-1499 is interaction with PLSCR1; it reads KAKRAPK. 3 positions are modified to phosphoserine: Ser-1509, Ser-1511, and Ser-1513. Over residues 1526–1536 the composition is skewed to basic residues; it reads GKGRGAKKRKA. Phosphoserine is present on residues Ser-1537 and Ser-1539. Residues 1550-1561 are compositionally biased toward basic residues; it reads KPSKTASKKPKK. Thr-1562 carries the post-translational modification Phosphothreonine. Ser-1563 and Ser-1568 each carry phosphoserine. Position 1596 is a phosphotyrosine (Tyr-1596). Ser-1600 is modified (phosphoserine).

The protein belongs to the type II topoisomerase family. Homodimer. Interacts with PLSCR1 and KIAA1210. Mg(2+) serves as cofactor. Mn(2+) is required as a cofactor. Requires Ca(2+) as cofactor.

The protein localises to the nucleus. It localises to the nucleolus. Its subcellular location is the nucleoplasm. The catalysed reaction is ATP-dependent breakage, passage and rejoining of double-stranded DNA.. Functionally, key decatenating enzyme that alters DNA topology by binding to two double-stranded DNA molecules, generating a double-stranded break in one of the strands, passing the intact strand through the broken strand, and religating the broken strand. This is DNA topoisomerase 2-beta (TOP2B) from Cricetulus longicaudatus (Long-tailed dwarf hamster).